The chain runs to 371 residues: Forkhead box protein J1.2 (371 aa).

2 disordered regions span residues 45-74 (ANSRPPLPRASQGPCSPPAGDTASCQAPRT) and 80-99 (VAVPTAWASLPTPSPSPVQE). Residues 109–203 (KPPYSYATLI…VNGVLKRRRM (95 aa)) constitute a DNA-binding region (fork-head). Residues 228-248 (PSSHHMQHISGGHRQSRRYEK) form a disordered region.

The protein belongs to the FOXJ1 family. Expressed diffusely through much of gastrula and neurula stage embryos. At stage 23 (late neurula), limited to the otic vesicle. By stage 28 (tailbud), also expressed transiently in the presumptive nephrostomes of the pronephros. At stage 35 (early tadpole), expressed broadly in the head and strongly expressed in the developing gill structures.

The protein localises to the nucleus. In terms of biological role, key transcription factor required for motile ciliogenesis. Activates genes essential for motile cilia formation and function. This chain is Forkhead box protein J1.2, found in Xenopus tropicalis (Western clawed frog).